A 153-amino-acid chain; its full sequence is UPF0311 protein RPA1785 (153 aa).

Belongs to the UPF0311 family.

This chain is UPF0311 protein RPA1785, found in Rhodopseudomonas palustris (strain ATCC BAA-98 / CGA009).